Here is a 132-residue protein sequence, read N- to C-terminus: U11/U12 small nuclear ribonucleoprotein 25 kDa protein (132 aa).

The Ubiquitin-like domain occupies 41 to 132; the sequence is MTVRVCKMDG…VSFIKKLRQK (92 aa).

As to quaternary structure, component of the U11/U12 snRNPs that are part of the U12-type spliceosome.

The protein localises to the nucleus. The sequence is that of U11/U12 small nuclear ribonucleoprotein 25 kDa protein (SNRNP25) from Homo sapiens (Human).